The sequence spans 284 residues: Avenin-like b3 (284 aa).

Residues 1-18 (MKVFILALLALTATTAIA) form the signal peptide.

Belongs to the prolamin family. Post-translationally, contains disulfide bonds.

Functionally, seed storage protein. Might be integrated via inter-chain disulfide bonds within the glutenin polymer. The sequence is that of Avenin-like b3 from Triticum aestivum (Wheat).